The primary structure comprises 252 residues: NAD-dependent protein deacetylase (252 aa).

A Deacetylase sirtuin-type domain is found at 2–243; the sequence is DSKRDEKILE…DRVVKELKKI (242 aa). NAD(+) is bound by residues Ala-28, Thr-32, Phe-39, Arg-40, Gln-109, Ile-111, Asp-112, and His-127. Residue Phe-39 coordinates nicotinamide. Nicotinamide contacts are provided by Ile-111 and Asp-112. His-127 (proton acceptor) is an active-site residue. Residues Cys-135, Cys-138, Cys-148, and Cys-150 each coordinate Zn(2+). Residues Thr-188, Ser-189, and Asn-211 each contribute to the NAD(+) site.

This sequence belongs to the sirtuin family. Class U subfamily. Zn(2+) is required as a cofactor.

It localises to the cytoplasm. It carries out the reaction N(6)-acetyl-L-lysyl-[protein] + NAD(+) + H2O = 2''-O-acetyl-ADP-D-ribose + nicotinamide + L-lysyl-[protein]. NAD-dependent protein deacetylase which modulates the activities of several enzymes which are inactive in their acetylated form. This Fusobacterium nucleatum subsp. nucleatum (strain ATCC 25586 / DSM 15643 / BCRC 10681 / CIP 101130 / JCM 8532 / KCTC 2640 / LMG 13131 / VPI 4355) protein is NAD-dependent protein deacetylase.